The following is a 170-amino-acid chain: MNLKEFVVDVKDFPQKGIIFKDITPLLNNKDAFKYMIDTIAEFVKQLDVDVIVAPEARGFLLASAVAYATNKRFVLVRKPNKLPREVYDVEYSLEYGTNHQQIHKEDLKPNDKVVVIDDVLATGGTMQAIIDLVKLSKAEVVGMSFLIDLTFLHKEDLFSEYQVQKLIKY.

Belongs to the purine/pyrimidine phosphoribosyltransferase family. Homodimer.

The protein localises to the cytoplasm. It catalyses the reaction AMP + diphosphate = 5-phospho-alpha-D-ribose 1-diphosphate + adenine. It functions in the pathway purine metabolism; AMP biosynthesis via salvage pathway; AMP from adenine: step 1/1. In terms of biological role, catalyzes a salvage reaction resulting in the formation of AMP, that is energically less costly than de novo synthesis. The polypeptide is Adenine phosphoribosyltransferase (Mycoplasma capricolum subsp. capricolum (strain California kid / ATCC 27343 / NCTC 10154)).